A 409-amino-acid polypeptide reads, in one-letter code: Broad specificity amino-acid racemase (409 aa).

The first 23 residues, Met-1–Ala-23, serve as a signal peptide directing secretion. A disulfide bridge connects residues Cys-70 and Cys-96. Lys-74 acts as the Proton acceptor in catalysis. Position 74 is an N6-(pyridoxal phosphate)lysine (Lys-74). Arg-173 contributes to the substrate binding site. Tyr-300 acts as the Proton acceptor in catalysis. Met-348 provides a ligand contact to substrate.

This sequence belongs to the alanine racemase family. Bsr subfamily. In terms of assembly, homodimer. The cofactor is pyridoxal 5'-phosphate.

It is found in the periplasm. The catalysed reaction is an L-alpha-amino acid = a D-alpha-amino acid. It catalyses the reaction L-lysine = D-lysine. It carries out the reaction L-arginine = D-arginine. The enzyme catalyses L-ornithine = D-ornithine. The catalysed reaction is L-alanine = D-alanine. It catalyses the reaction L-methionine = D-methionine. Its function is as follows. Amino-acid racemase able to utilize a broad range of substrates. Is mostly active with lysine and arginine and, to a lesser extent, with ornithine, whereas is about 10 times less active with alanine, methionine and ethionine. With phenylalanine as substrate only a trace activity is detectable, and is inactive with glutamate. Plays a key role in the catabolism of D-arginine and D-lysine, that allows P.taetrolens strain NBRC 3460 to grow on these basic D-amino acids as a sole carbon source. In Pseudomonas taetrolens, this protein is Broad specificity amino-acid racemase.